Consider the following 328-residue polypeptide: P2Y purinoceptor 3 (328 aa).

Over 1–22 (MSMANFTGGRNSCTFHEEFKQV) the chain is Extracellular. Asparagine 5 is a glycosylation site (N-linked (GlcNAc...) asparagine). Residues 23-43 (LLPLVYSVVFLLGLPLNAVVI) traverse the membrane as a helical segment. The Cytoplasmic portion of the chain corresponds to 44 to 57 (GQIWLARKALTRTT). Residues 58–78 (IYMLNLAMADLLYVCSLPLLI) traverse the membrane as a helical segment. Over 79 to 96 (YNYTQKDYWPFGDFTCKF) the chain is Extracellular. An intrachain disulfide couples cysteine 94 to cysteine 172. The chain crosses the membrane as a helical span at residues 97-117 (VRFQFYTNLHGSILFLTCISV). Residues 118-139 (QRYMGICHPLASWHKKKGKKLT) lie on the Cytoplasmic side of the membrane. A helical membrane pass occupies residues 140–160 (WLVCAAVWFIVIAQCLPTFVF). At 161–189 (ASTGTQRNRTVCYDLSPPDRSTSYFPYGI) the chain is on the extracellular side. The chain crosses the membrane as a helical span at residues 190 to 210 (TLTITGFLLPFAAILACYCSM). Residues 211–231 (ARILCQKDELIGLAVHKKKDK) are Cytoplasmic-facing. The chain crosses the membrane as a helical span at residues 232–252 (AVRMIIIVVIVFSISFFPFHL). The Extracellular portion of the chain corresponds to 253–275 (TKTIYLIVRSSASLPCPTLQAFA). Residues 276–298 (IAYKCTRPFASMNSVLDPILFYF) traverse the membrane as a helical segment. Residues 299–323 (TQRKFRESTRYLLDKMSSKWRQDHC) are Cytoplasmic-facing.

This sequence belongs to the G-protein coupled receptor 1 family.

The protein localises to the cell membrane. Functionally, receptor for extracellular ADP &gt; UTP &gt; ATP = UDP. The activity of this receptor is mediated by G proteins which activate a phosphatidylinositol-calcium second messenger system. This chain is P2Y purinoceptor 3 (P2RY3), found in Gallus gallus (Chicken).